A 642-amino-acid chain; its full sequence is Mini-chromosome maintenance complex-binding protein (642 aa).

A compositionally biased stretch (polar residues) spans 151-161; sequence ARVSPSTSYTP. Residues 151-197 are disordered; the sequence is ARVSPSTSYTPSRHKRSYEDDDDMDLQPNKQKDQHAGARQAGSVGGL. At S154 the chain carries Phosphoserine. T160 carries the post-translational modification Phosphothreonine. Phosphoserine is present on residues S167 and S298.

This sequence belongs to the MCMBP family. As to quaternary structure, interacts with the MCM complex: associates with the MCM3-7 complex which lacks MCM2, while it does not interact with the MCM complex when MCM2 is present (MCM2-7 complex). Interacts with the RPA complex, when composed of all RPA1, RPA2 and RPA3 components, but not with RPA1 or RPA2 alone.

It localises to the nucleus. In terms of biological role, associated component of the MCM complex that acts as a regulator of DNA replication. Binds to the MCM complex during late S phase and promotes the disassembly of the MCM complex from chromatin, thereby acting as a key regulator of pre-replication complex (pre-RC) unloading from replicated DNA. Can dissociate the MCM complex without addition of ATP; probably acts by destabilizing interactions of each individual subunits of the MCM complex. Required for sister chromatid cohesion. In Homo sapiens (Human), this protein is Mini-chromosome maintenance complex-binding protein (MCMBP).